The following is a 350-amino-acid chain: Zinc finger protein 367 (350 aa).

The tract at residues 104–151 (SGLRGRGAPPPAASASAAASGGEDEEEASSPDSGHLKDGIRRGRPRAD) is disordered. The span at 137–151 (GHLKDGIRRGRPRAD) shows a compositional bias: basic and acidic residues. 2 C2H2-type zinc fingers span residues 167 to 189 (IRCN…KRTH) and 195 to 219 (YLCD…QRLH). Residues 290–327 (KGKLVQKADQEQQDPLEYLQSDEEDDEKRGAQRRLQEQ) form a disordered region. Positions 308-342 (LQSDEEDDEKRGAQRRLQEQRERLHGALALIELAN) form a coiled coil. S310 is modified (phosphoserine). Residues 316 to 327 (EKRGAQRRLQEQ) show a composition bias toward basic and acidic residues.

The protein belongs to the krueppel C2H2-type zinc-finger protein family.

It is found in the nucleus. Its function is as follows. Transcriptional activator. Isoform 1 may be involved in transcriptional activation of erythroid genes. This chain is Zinc finger protein 367 (ZNF367), found in Homo sapiens (Human).